Reading from the N-terminus, the 189-residue chain is Large ribosomal subunit protein uL5 (189 aa).

It belongs to the universal ribosomal protein uL5 family. As to quaternary structure, part of the 50S ribosomal subunit; part of the 5S rRNA/L5/L18/L25 subcomplex. Contacts the 5S rRNA and the P site tRNA. Forms a bridge to the 30S subunit in the 70S ribosome.

In terms of biological role, this is one of the proteins that bind and probably mediate the attachment of the 5S RNA into the large ribosomal subunit, where it forms part of the central protuberance. In the 70S ribosome it contacts protein S13 of the 30S subunit (bridge B1b), connecting the 2 subunits; this bridge is implicated in subunit movement. Contacts the P site tRNA; the 5S rRNA and some of its associated proteins might help stabilize positioning of ribosome-bound tRNAs. This is Large ribosomal subunit protein uL5 from Salinispora tropica (strain ATCC BAA-916 / DSM 44818 / JCM 13857 / NBRC 105044 / CNB-440).